The sequence spans 134 residues: Small ribosomal subunit protein uS11 (134 aa).

The protein belongs to the universal ribosomal protein uS11 family. Part of the 30S ribosomal subunit. Interacts with proteins S7 and S18. Binds to IF-3.

Located on the platform of the 30S subunit, it bridges several disparate RNA helices of the 16S rRNA. Forms part of the Shine-Dalgarno cleft in the 70S ribosome. The chain is Small ribosomal subunit protein uS11 from Parafrankia sp. (strain EAN1pec).